Consider the following 206-residue polypeptide: Pyridoxine/pyridoxamine 5'-phosphate oxidase (206 aa).

Residues 53–58 (RMVLLK), 68–69 (YT), Lys75, and Gln97 contribute to the FMN site. Lys58 serves as a coordination point for substrate. Tyr115, Arg119, and Ser123 together coordinate substrate. FMN-binding positions include 132 to 133 (QS) and Trp177. 183-185 (RLH) is a substrate binding site. FMN is bound at residue Arg187.

Belongs to the pyridoxamine 5'-phosphate oxidase family. In terms of assembly, homodimer. The cofactor is FMN.

It carries out the reaction pyridoxamine 5'-phosphate + O2 + H2O = pyridoxal 5'-phosphate + H2O2 + NH4(+). The enzyme catalyses pyridoxine 5'-phosphate + O2 = pyridoxal 5'-phosphate + H2O2. Its pathway is cofactor metabolism; pyridoxal 5'-phosphate salvage; pyridoxal 5'-phosphate from pyridoxamine 5'-phosphate: step 1/1. The protein operates within cofactor metabolism; pyridoxal 5'-phosphate salvage; pyridoxal 5'-phosphate from pyridoxine 5'-phosphate: step 1/1. In terms of biological role, catalyzes the oxidation of either pyridoxine 5'-phosphate (PNP) or pyridoxamine 5'-phosphate (PMP) into pyridoxal 5'-phosphate (PLP). This is Pyridoxine/pyridoxamine 5'-phosphate oxidase from Sinorhizobium fredii (strain NBRC 101917 / NGR234).